Here is a 425-residue protein sequence, read N- to C-terminus: Glutamyl-tRNA reductase (425 aa).

Substrate-binding positions include 51-54, Ser-111, 116-118, and Gln-122; these read TCNR and DMQ. Cys-52 functions as the Nucleophile in the catalytic mechanism. 191 to 196 is a binding site for NADP(+); the sequence is GLGEIG.

The protein belongs to the glutamyl-tRNA reductase family. In terms of assembly, homodimer.

The catalysed reaction is (S)-4-amino-5-oxopentanoate + tRNA(Glu) + NADP(+) = L-glutamyl-tRNA(Glu) + NADPH + H(+). The protein operates within porphyrin-containing compound metabolism; protoporphyrin-IX biosynthesis; 5-aminolevulinate from L-glutamyl-tRNA(Glu): step 1/2. Its function is as follows. Catalyzes the NADPH-dependent reduction of glutamyl-tRNA(Glu) to glutamate 1-semialdehyde (GSA). This chain is Glutamyl-tRNA reductase, found in Cytophaga hutchinsonii (strain ATCC 33406 / DSM 1761 / CIP 103989 / NBRC 15051 / NCIMB 9469 / D465).